Reading from the N-terminus, the 248-residue chain is Triosephosphate isomerase (248 aa).

Substrate contacts are provided by Asn-10 and Lys-12. Residue His-95 is the Electrophile of the active site. The active-site Proton acceptor is the Glu-165.

This sequence belongs to the triosephosphate isomerase family. As to quaternary structure, homodimer.

The catalysed reaction is D-glyceraldehyde 3-phosphate = dihydroxyacetone phosphate. It participates in carbohydrate biosynthesis; gluconeogenesis. Its pathway is carbohydrate degradation; glycolysis; D-glyceraldehyde 3-phosphate from glycerone phosphate: step 1/1. This is Triosephosphate isomerase (TPI1) from Eremothecium gossypii (strain ATCC 10895 / CBS 109.51 / FGSC 9923 / NRRL Y-1056) (Yeast).